A 482-amino-acid chain; its full sequence is tRNA sulfurtransferase (482 aa).

The region spanning 61–165 is the THUMP domain; that stretch reads PVIADALTRI…NDKLMLVKAR (105 aa). Residues 183 to 184, Lys265, Gly287, and Gln296 contribute to the ATP site; that span reads LI. A disulfide bond links Cys344 and Cys456. Positions 404–482 constitute a Rhodanese domain; sequence FDADQVILDI…GFTNVKVYRP (79 aa). The active-site Cysteine persulfide intermediate is Cys456.

This sequence belongs to the ThiI family.

It is found in the cytoplasm. It carries out the reaction [ThiI sulfur-carrier protein]-S-sulfanyl-L-cysteine + a uridine in tRNA + 2 reduced [2Fe-2S]-[ferredoxin] + ATP + H(+) = [ThiI sulfur-carrier protein]-L-cysteine + a 4-thiouridine in tRNA + 2 oxidized [2Fe-2S]-[ferredoxin] + AMP + diphosphate. The catalysed reaction is [ThiS sulfur-carrier protein]-C-terminal Gly-Gly-AMP + S-sulfanyl-L-cysteinyl-[cysteine desulfurase] + AH2 = [ThiS sulfur-carrier protein]-C-terminal-Gly-aminoethanethioate + L-cysteinyl-[cysteine desulfurase] + A + AMP + 2 H(+). Its pathway is cofactor biosynthesis; thiamine diphosphate biosynthesis. Its function is as follows. Catalyzes the ATP-dependent transfer of a sulfur to tRNA to produce 4-thiouridine in position 8 of tRNAs, which functions as a near-UV photosensor. Also catalyzes the transfer of sulfur to the sulfur carrier protein ThiS, forming ThiS-thiocarboxylate. This is a step in the synthesis of thiazole, in the thiamine biosynthesis pathway. The sulfur is donated as persulfide by IscS. The chain is tRNA sulfurtransferase from Serratia proteamaculans (strain 568).